We begin with the raw amino-acid sequence, 1440 residues long: Protein lin-15B (1440 aa).

Disordered regions lie at residues 1 to 22 (MQTL…SSSS), 48 to 67 (ILRH…HLDA), 618 to 660 (PKEE…GRPI), and 738 to 769 (KDEP…PSSY). Over residues 10–22 (TSNPASIPTSSSS) the composition is skewed to low complexity. Positions 631-646 (STSSPATSSPTIIRPR) are enriched in low complexity. Residues 757–767 (NRTTASSQGPS) are compositionally biased toward polar residues. Residues 1135 to 1209 (NPGVCCFCSK…LLKGMIPDAA (75 aa)) form a THAP-type zinc finger. Disordered regions lie at residues 1239–1281 (AIDL…EPSQ), 1298–1350 (RELS…GTSQ), and 1395–1440 (FADE…PSNE). The span at 1254-1264 (TQEEEEEEEYE) shows a compositional bias: acidic residues. Positions 1317–1329 (PNPRGRPRKYPKN) form a DNA-binding region, a.T hook 1. The segment covering 1396 to 1407 (ADEEEEEEEYEE) has biased composition (acidic residues). Residues 1418–1430 (GRPVGRPRKDANK) constitute a DNA-binding region (a.T hook 2).

Functionally, synthetic multivulva (synMuv) class B protein. SynMuv proteins are required to repress the induction of vulval development. Acts redundantly with SynMuv class A protein lin-15A to negatively regulate vulval development. Regulates let-23 basal activity. The protein is Protein lin-15B of Caenorhabditis elegans.